We begin with the raw amino-acid sequence, 235 residues long: Probable transcriptional regulatory protein Ccur92_05350 (235 aa).

Belongs to the TACO1 family.

The protein localises to the cytoplasm. This chain is Probable transcriptional regulatory protein Ccur92_05350, found in Campylobacter curvus (strain 525.92).